The sequence spans 184 residues: ATP synthase subunit delta (184 aa).

Belongs to the ATPase delta chain family. As to quaternary structure, F-type ATPases have 2 components, F(1) - the catalytic core - and F(0) - the membrane proton channel. F(1) has five subunits: alpha(3), beta(3), gamma(1), delta(1), epsilon(1). F(0) has three main subunits: a(1), b(2) and c(10-14). The alpha and beta chains form an alternating ring which encloses part of the gamma chain. F(1) is attached to F(0) by a central stalk formed by the gamma and epsilon chains, while a peripheral stalk is formed by the delta and b chains.

Its subcellular location is the cell inner membrane. Functionally, f(1)F(0) ATP synthase produces ATP from ADP in the presence of a proton or sodium gradient. F-type ATPases consist of two structural domains, F(1) containing the extramembraneous catalytic core and F(0) containing the membrane proton channel, linked together by a central stalk and a peripheral stalk. During catalysis, ATP synthesis in the catalytic domain of F(1) is coupled via a rotary mechanism of the central stalk subunits to proton translocation. This protein is part of the stalk that links CF(0) to CF(1). It either transmits conformational changes from CF(0) to CF(1) or is implicated in proton conduction. This is ATP synthase subunit delta from Rickettsia rickettsii (strain Iowa).